The following is a 103-amino-acid chain: Pro-corazonin (103 aa).

A signal peptide spans 1 to 19; it reads MSANVTLLLIFVTLASVTA. Position 20 is a pyrrolidone carboxylic acid (Gln-20). At Asn-30 the chain carries Asparagine amide. A propeptide spanning residues 34 to 103 is cleaved from the precursor; sequence DQGHLRPELK…NLNAMMDAFY (70 aa).

In terms of tissue distribution, expressed in corpora cardiaca (CC), corpora allata (CA), antennal lobe (AL) and gnathal ganglion (GNG) (at protein level). Expression in CC and CA detected in all animals, expression in AL and in GNG in some animals.

The protein resides in the secreted. In terms of biological role, cardioactive peptide. Corazonin is probably involved in the physiological regulation of the heart beat. This chain is Pro-corazonin, found in Agrotis ipsilon (Black cutworm moth).